The chain runs to 113 residues: Large ribosomal subunit protein eL31B (113 aa).

This sequence belongs to the eukaryotic ribosomal protein eL31 family. Component of the large ribosomal subunit (LSU). Mature yeast ribosomes consist of a small (40S) and a large (60S) subunit. The 40S small subunit contains 1 molecule of ribosomal RNA (18S rRNA) and 33 different proteins (encoded by 57 genes). The large 60S subunit contains 3 rRNA molecules (25S, 5.8S and 5S rRNA) and 46 different proteins (encoded by 81 genes).

Its subcellular location is the cytoplasm. Functionally, component of the ribosome, a large ribonucleoprotein complex responsible for the synthesis of proteins in the cell. The small ribosomal subunit (SSU) binds messenger RNAs (mRNAs) and translates the encoded message by selecting cognate aminoacyl-transfer RNA (tRNA) molecules. The large subunit (LSU) contains the ribosomal catalytic site termed the peptidyl transferase center (PTC), which catalyzes the formation of peptide bonds, thereby polymerizing the amino acids delivered by tRNAs into a polypeptide chain. The nascent polypeptides leave the ribosome through a tunnel in the LSU and interact with protein factors that function in enzymatic processing, targeting, and the membrane insertion of nascent chains at the exit of the ribosomal tunnel. The chain is Large ribosomal subunit protein eL31B from Saccharomyces cerevisiae (strain ATCC 204508 / S288c) (Baker's yeast).